Consider the following 431-residue polypeptide: Phosphoribosylamine--glycine ligase (431 aa).

The 208-residue stretch at 109–316 folds into the ATP-grasp domain; the sequence is KDFLARHGIP…LVDLVEAAID (208 aa). ATP is bound at residue 135–196; that stretch reads VREKGAPIVV…EEFLDGEEAS (62 aa). Mg(2+)-binding residues include Glu286 and Asn288.

Belongs to the GARS family. Requires Mg(2+) as cofactor. It depends on Mn(2+) as a cofactor.

It catalyses the reaction 5-phospho-beta-D-ribosylamine + glycine + ATP = N(1)-(5-phospho-beta-D-ribosyl)glycinamide + ADP + phosphate + H(+). It participates in purine metabolism; IMP biosynthesis via de novo pathway; N(1)-(5-phospho-D-ribosyl)glycinamide from 5-phospho-alpha-D-ribose 1-diphosphate: step 2/2. This is Phosphoribosylamine--glycine ligase from Xanthomonas campestris pv. campestris (strain ATCC 33913 / DSM 3586 / NCPPB 528 / LMG 568 / P 25).